The primary structure comprises 684 residues: MPSLSTPPSQNLAFSPAASATSSRLTPSSKRSFYPHRLPDPTALCRCSSSSGSNSSSSSSSDDNPRWDSAIQDVLKSAIKRFDSVLSWYATLDNDDGEQGSENVEKIDDDWDWDRWKKHFDQVDDQDRLLSVLKSQLNRAIKREDYEDAARLKVAIAATATNDAVGKVMSTFYRALLEERYKDAVYLRDKAGAGLVGWWSGISEDVKDPFGLIVQITAEHGRYVARSYNPRQLSTSAAGAPLFEIFLTLDGKGNYKKQAVYLKWKEIFPDVPTMPSRTLTPGRFLTSPGRKEDTGNLAVESSEDEESDNSDDDSDLLEESSGFQSFLRDMIPGVKVKVMKVTAPGRVDKDFISKVIEQIADEEDEENDLDIEDIDVEDDTKAEIDEKNADIELESVTDEIIDNNGGREIAVKFVIGDIVDRLSGNQPLKESLRSPANLESVENSSFYLRLEKDLNVKESKGVEGTTLVDGKGSRQSRRRIENIMGDLAKSIEKEKKISVKMLKDVGELLSLTLSQAQNRQQLSGLTKFRRIDVTPSLDPLDGLYIGAHGLYTSEVIHLKRKFGQWKGGKESKKPTDIEFYEYVEAVKLTGDPYVPAGKVAFRAKIGRRYELPHKGLIPEEFGVIARYKGQGRLADPGFRNPRWVDGELVILDGKYVKGGPVVGFVYWAPEYHFVMFFNRLRLQA.

Over residues 1–31 (MPSLSTPPSQNLAFSPAASATSSRLTPSSKR) the composition is skewed to polar residues. Residues 1 to 46 (MPSLSTPPSQNLAFSPAASATSSRLTPSSKRSFYPHRLPDPTALCR) constitute a chloroplast transit peptide. The disordered stretch occupies residues 1-66 (MPSLSTPPSQ…SSSSSDDNPR (66 aa)). Residues 48–61 (SSSSGSNSSSSSSS) show a composition bias toward low complexity. The UVR domain occupies 127 to 162 (DRLLSVLKSQLNRAIKREDYEDAARLKVAIAATATN). The tract at residues 278–318 (TLTPGRFLTSPGRKEDTGNLAVESSEDEESDNSDDDSDLLE) is disordered. Positions 301 to 318 (SSEDEESDNSDDDSDLLE) are enriched in acidic residues.

The protein localises to the plastid. It localises to the chloroplast. Functionally, together with EX2, enables higher plants to perceive singlet oxygen as a stress signal in plastid that activates a genetically determined nuclear stress response program which triggers a programmed cell death (PCD). This transfer of singlet oxygen-induced stress-related signals from the plastid to the nucleus that triggers genetically controlled PCD pathway is unique to photosynthetic eukaryotes and operates under mild stress conditions, impeding photosystem II (PSII) without causing photooxidative damage of the plant. The sequence is that of Protein EXECUTER 1, chloroplastic from Arabidopsis thaliana (Mouse-ear cress).